We begin with the raw amino-acid sequence, 173 residues long: Large ribosomal subunit protein uL10 (173 aa).

Belongs to the universal ribosomal protein uL10 family. Part of the ribosomal stalk of the 50S ribosomal subunit. The N-terminus interacts with L11 and the large rRNA to form the base of the stalk. The C-terminus forms an elongated spine to which L12 dimers bind in a sequential fashion forming a multimeric L10(L12)X complex.

In terms of biological role, forms part of the ribosomal stalk, playing a central role in the interaction of the ribosome with GTP-bound translation factors. The chain is Large ribosomal subunit protein uL10 from Chlorobaculum parvum (strain DSM 263 / NCIMB 8327) (Chlorobium vibrioforme subsp. thiosulfatophilum).